A 138-amino-acid chain; its full sequence is Mediator of RNA polymerase II transcription subunit 21 (138 aa).

The stretch at 87-128 (KHQLEKIKKLQNSIEEKQLERKSLESENEDLKLQLAKRIETF) forms a coiled coil.

Belongs to the Mediator complex subunit 21 family. As to quaternary structure, component of the Mediator complex.

It is found in the nucleus. Functionally, component of the Mediator complex, a coactivator involved in the regulated transcription of nearly all RNA polymerase II-dependent genes. Mediator functions as a bridge to convey information from gene-specific regulatory proteins to the basal RNA polymerase II transcription machinery. Mediator is recruited to promoters by direct interactions with regulatory proteins and serves as a scaffold for the assembly of a functional preinitiation complex with RNA polymerase II and the general transcription factors. The chain is Mediator of RNA polymerase II transcription subunit 21 (med21) from Schizosaccharomyces pombe (strain 972 / ATCC 24843) (Fission yeast).